We begin with the raw amino-acid sequence, 343 residues long: Heat-inducible transcription repressor HrcA (343 aa).

Belongs to the HrcA family.

Negative regulator of class I heat shock genes (grpE-dnaK-dnaJ and groELS operons). Prevents heat-shock induction of these operons. The sequence is that of Heat-inducible transcription repressor HrcA from Mycobacterium tuberculosis (strain ATCC 25177 / H37Ra).